A 245-amino-acid polypeptide reads, in one-letter code: Bis(5'-nucleosyl)-tetraphosphatase PrpE [asymmetrical] (245 aa).

Belongs to the PrpE family. The cofactor is Ni(2+).

The catalysed reaction is P(1),P(4)-bis(5'-guanosyl) tetraphosphate + H2O = GMP + GTP + 2 H(+). Its function is as follows. Asymmetrically hydrolyzes Ap4p to yield AMP and ATP. The polypeptide is Bis(5'-nucleosyl)-tetraphosphatase PrpE [asymmetrical] (Geobacillus sp. (strain WCH70)).